Here is an 83-residue protein sequence, read N- to C-terminus: Small ribosomal subunit protein bS20 (83 aa).

It belongs to the bacterial ribosomal protein bS20 family.

Its function is as follows. Binds directly to 16S ribosomal RNA. The polypeptide is Small ribosomal subunit protein bS20 (Lactobacillus delbrueckii subsp. bulgaricus (strain ATCC 11842 / DSM 20081 / BCRC 10696 / JCM 1002 / NBRC 13953 / NCIMB 11778 / NCTC 12712 / WDCM 00102 / Lb 14)).